A 189-amino-acid chain; its full sequence is Large ribosomal subunit protein uL6 (189 aa).

This sequence belongs to the universal ribosomal protein uL6 family. In terms of assembly, part of the 50S ribosomal subunit.

Functionally, this protein binds to the 23S rRNA, and is important in its secondary structure. It is located near the subunit interface in the base of the L7/L12 stalk, and near the tRNA binding site of the peptidyltransferase center. This is Large ribosomal subunit protein uL6 from Phocaeicola vulgatus (strain ATCC 8482 / DSM 1447 / JCM 5826 / CCUG 4940 / NBRC 14291 / NCTC 11154) (Bacteroides vulgatus).